The following is a 161-amino-acid chain: Zinc finger A20 and AN1 domain-containing stress-associated protein 4 (161 aa).

The segment at 10–44 (PEGHRLCVNNCGFFGSSATMNLCSNCYGDLCLKQQ) adopts an A20-type zinc-finger fold. Residues Cys16, Cys20, Cys32, and Cys35 each coordinate Zn(2+). The span at 76 to 85 (TTKKTEEKKP) shows a compositional bias: basic and acidic residues. The disordered stretch occupies residues 76–99 (TTKKTEEKKPIQIPTEQPSPPQRP). The AN1-type zinc finger occupies 96-142 (PQRPNRCTVCRKRVGLTGFMCRCGTTFCGSHRYPEVHGCTFDFKSAG). Residues Cys102, Cys105, Cys116, Cys118, Cys123, His126, His132, and Cys134 each contribute to the Zn(2+) site.

In terms of biological role, may be involved in environmental stress response. This is Zinc finger A20 and AN1 domain-containing stress-associated protein 4 (SAP4) from Arabidopsis thaliana (Mouse-ear cress).